The sequence spans 495 residues: Glutamate--tRNA ligase 1 (495 aa).

A 'HIGH' region motif is present at residues 10 to 20 (PSPTGALHMGG). A 'KMSKS' region motif is present at residues 251 to 255 (KLSKR). K254 is an ATP binding site.

The protein belongs to the class-I aminoacyl-tRNA synthetase family. Glutamate--tRNA ligase type 1 subfamily. Monomer.

Its subcellular location is the cytoplasm. The catalysed reaction is tRNA(Glu) + L-glutamate + ATP = L-glutamyl-tRNA(Glu) + AMP + diphosphate. Its function is as follows. Catalyzes the attachment of glutamate to tRNA(Glu) in a two-step reaction: glutamate is first activated by ATP to form Glu-AMP and then transferred to the acceptor end of tRNA(Glu). In Syntrophomonas wolfei subsp. wolfei (strain DSM 2245B / Goettingen), this protein is Glutamate--tRNA ligase 1.